Consider the following 187-residue polypeptide: dTTP/UTP pyrophosphatase (187 aa).

Asp-65 functions as the Proton acceptor in the catalytic mechanism.

This sequence belongs to the Maf family. YhdE subfamily. A divalent metal cation is required as a cofactor.

It is found in the cytoplasm. It carries out the reaction dTTP + H2O = dTMP + diphosphate + H(+). The enzyme catalyses UTP + H2O = UMP + diphosphate + H(+). Nucleoside triphosphate pyrophosphatase that hydrolyzes dTTP and UTP. May have a dual role in cell division arrest and in preventing the incorporation of modified nucleotides into cellular nucleic acids. This Pyrococcus abyssi (strain GE5 / Orsay) protein is dTTP/UTP pyrophosphatase.